A 211-amino-acid polypeptide reads, in one-letter code: Holliday junction branch migration complex subunit RuvA (211 aa).

The domain I stretch occupies residues 1–70 (MIQFLQGQVV…QDQIALFGFG (70 aa)). Residues 71 to 149 (RLAERDLFGQ…QWHKLQMGTG (79 aa)) form a domain II region. A flexible linker region spans residues 150–158 (ETDSTLPTT). The interval 158–211 (TALLEDLEMTLLALGYTQTEIQQAIAMVSQVPDVAQSEDPEVWIRQAIGWLSDH) is domain III.

This sequence belongs to the RuvA family. In terms of assembly, homotetramer. Forms an RuvA(8)-RuvB(12)-Holliday junction (HJ) complex. HJ DNA is sandwiched between 2 RuvA tetramers; dsDNA enters through RuvA and exits via RuvB. An RuvB hexamer assembles on each DNA strand where it exits the tetramer. Each RuvB hexamer is contacted by two RuvA subunits (via domain III) on 2 adjacent RuvB subunits; this complex drives branch migration. In the full resolvosome a probable DNA-RuvA(4)-RuvB(12)-RuvC(2) complex forms which resolves the HJ.

The protein localises to the cytoplasm. In terms of biological role, the RuvA-RuvB-RuvC complex processes Holliday junction (HJ) DNA during genetic recombination and DNA repair, while the RuvA-RuvB complex plays an important role in the rescue of blocked DNA replication forks via replication fork reversal (RFR). RuvA specifically binds to HJ cruciform DNA, conferring on it an open structure. The RuvB hexamer acts as an ATP-dependent pump, pulling dsDNA into and through the RuvAB complex. HJ branch migration allows RuvC to scan DNA until it finds its consensus sequence, where it cleaves and resolves the cruciform DNA. The sequence is that of Holliday junction branch migration complex subunit RuvA from Synechocystis sp. (strain ATCC 27184 / PCC 6803 / Kazusa).